The chain runs to 116 residues: Large ribosomal subunit protein bL20c (116 aa).

The protein belongs to the bacterial ribosomal protein bL20 family.

The protein localises to the plastid. It localises to the chloroplast. In terms of biological role, binds directly to 23S ribosomal RNA and is necessary for the in vitro assembly process of the 50S ribosomal subunit. It is not involved in the protein synthesizing functions of that subunit. The sequence is that of Large ribosomal subunit protein bL20c from Cyanidioschyzon merolae (strain NIES-3377 / 10D) (Unicellular red alga).